A 476-amino-acid polypeptide reads, in one-letter code: ATP synthase subunit beta 2 (476 aa).

160 to 167 (GGAGVGKT) lines the ATP pocket.

It belongs to the ATPase alpha/beta chains family. F-type ATPases have 2 components, CF(1) - the catalytic core - and CF(0) - the membrane proton channel. CF(1) has five subunits: alpha(3), beta(3), gamma(1), delta(1), epsilon(1). CF(0) has four main subunits: a(1), b(1), b'(1) and c(9-12).

It is found in the cell inner membrane. The catalysed reaction is ATP + H2O + 4 H(+)(in) = ADP + phosphate + 5 H(+)(out). Functionally, produces ATP from ADP in the presence of a proton gradient across the membrane. The catalytic sites are hosted primarily by the beta subunits. In Bradyrhizobium sp. (strain BTAi1 / ATCC BAA-1182), this protein is ATP synthase subunit beta 2.